Consider the following 76-residue polypeptide: Large ribosomal subunit protein bL31 (76 aa).

Positions 16, 18, 38, and 41 each coordinate Zn(2+).

It belongs to the bacterial ribosomal protein bL31 family. Type A subfamily. In terms of assembly, part of the 50S ribosomal subunit. Zn(2+) serves as cofactor.

Binds the 23S rRNA. This Nocardia farcinica (strain IFM 10152) protein is Large ribosomal subunit protein bL31.